Consider the following 74-residue polypeptide: U6-agatoxin-Ao1a (74 aa).

The N-terminal stretch at 1–19 (MRFYIAFFFLLLAADMALS) is a signal peptide. The propeptide occupies 20 to 30 (FEIGNSEELER). Intrachain disulfides connect Cys-44-Cys-56, Cys-49-Cys-61, and Cys-55-Cys-72.

Expressed by the venom gland.

It is found in the secreted. This is U6-agatoxin-Ao1a from Agelena orientalis (Funnel-web spider).